The primary structure comprises 134 residues: Neuropeptide-like peptide 11 (134 aa).

The signal sequence occupies residues 1-20 (MMSTLALVSLAIFGIAVVCA). Positions 21-106 (APKPATVPVA…YNRLIDAGKK (86 aa)) are excised as a propeptide. At A131 the chain carries Alanine amide.

This is Neuropeptide-like peptide 11 (nlp-11) from Caenorhabditis elegans.